The sequence spans 275 residues: MSAQQSQSRKTTTAIRQAKGPGKVVALTAYTAPMARQLDPHADLLLVGDSLGMVVYGLPSTLGVTLDMMIAHGAAVVRGSTQACVVVDLPFGSYQASPMQAFESAARVLAETGAQAVKLEGGVEMAETVQFLTARGVPVVSHIGLMPQQVNTVGGYKAQGMQADGSERILRDAQALQEAGAFALVVECTAEAVGRRVTEALQIPVIGIGASPACDGQILVTEDMLGMSGARVPRFVKQYAQLGDEIGRAAQRYAQDVRAGAFPAPEHCFGVQAKA.

Residues D49 and D88 each contribute to the Mg(2+) site. Residues 49–50 (DS), D88, and K118 each bind 3-methyl-2-oxobutanoate. E120 contributes to the Mg(2+) binding site. The Proton acceptor role is filled by E187.

It belongs to the PanB family. Homodecamer; pentamer of dimers. Mg(2+) is required as a cofactor.

Its subcellular location is the cytoplasm. The catalysed reaction is 3-methyl-2-oxobutanoate + (6R)-5,10-methylene-5,6,7,8-tetrahydrofolate + H2O = 2-dehydropantoate + (6S)-5,6,7,8-tetrahydrofolate. It functions in the pathway cofactor biosynthesis; (R)-pantothenate biosynthesis; (R)-pantoate from 3-methyl-2-oxobutanoate: step 1/2. Functionally, catalyzes the reversible reaction in which hydroxymethyl group from 5,10-methylenetetrahydrofolate is transferred onto alpha-ketoisovalerate to form ketopantoate. This Bordetella petrii (strain ATCC BAA-461 / DSM 12804 / CCUG 43448) protein is 3-methyl-2-oxobutanoate hydroxymethyltransferase.